Consider the following 410-residue polypeptide: Serine hydroxymethyltransferase (410 aa).

Residues Leu116 and 120–122 each bind (6S)-5,6,7,8-tetrahydrofolate; that span reads GHL. An N6-(pyridoxal phosphate)lysine modification is found at Lys225. 349–351 contributes to the (6S)-5,6,7,8-tetrahydrofolate binding site; it reads SPF.

This sequence belongs to the SHMT family. In terms of assembly, homodimer. Requires pyridoxal 5'-phosphate as cofactor.

Its subcellular location is the cytoplasm. The catalysed reaction is (6R)-5,10-methylene-5,6,7,8-tetrahydrofolate + glycine + H2O = (6S)-5,6,7,8-tetrahydrofolate + L-serine. Its pathway is one-carbon metabolism; tetrahydrofolate interconversion. It participates in amino-acid biosynthesis; glycine biosynthesis; glycine from L-serine: step 1/1. Functionally, catalyzes the reversible interconversion of serine and glycine with tetrahydrofolate (THF) serving as the one-carbon carrier. This reaction serves as the major source of one-carbon groups required for the biosynthesis of purines, thymidylate, methionine, and other important biomolecules. Also exhibits THF-independent aldolase activity toward beta-hydroxyamino acids, producing glycine and aldehydes, via a retro-aldol mechanism. In Leuconostoc mesenteroides subsp. mesenteroides (strain ATCC 8293 / DSM 20343 / BCRC 11652 / CCM 1803 / JCM 6124 / NCDO 523 / NBRC 100496 / NCIMB 8023 / NCTC 12954 / NRRL B-1118 / 37Y), this protein is Serine hydroxymethyltransferase.